The sequence spans 234 residues: Interleukin-34 (234 aa).

Positions 1–20 are cleaved as a signal peptide; that stretch reads MPQGLAWLRYLGILLGMALG. N-linked (GlcNAc...) asparagine glycosylation occurs at asparagine 76. Residues 191-234 form a disordered region; that stretch reads EAPQPQPRSPASAQCEAAQLYPLPQPPSTSLPRVLGPSAGPPTQ.

The protein belongs to the IL-34 family. Homodimer. Interacts with CSF1R.

It is found in the secreted. Functionally, cytokine that promotes the proliferation, survival and differentiation of monocytes and macrophages. Promotes the release of pro-inflammatory chemokines, and thereby plays an important role in innate immunity and in inflammatory processes. Plays an important role in the regulation of osteoclast proliferation and differentiation, and in the regulation of bone resorption. Signaling via CSF1R and its downstream effectors stimulates phosphorylation of MAPK1/ERK2 AND MAPK3/ERK1. This Bos taurus (Bovine) protein is Interleukin-34.